The primary structure comprises 441 residues: N-acetyl-S-(2-succino)cysteine monooxygenase (441 aa).

Aspartate 59, threonine 96, histidine 146, tyrosine 150, serine 220, and serine 221 together coordinate FMN.

Belongs to the NtaA/SnaA/DszA monooxygenase family. In terms of assembly, homodimer. It depends on FMN as a cofactor.

The catalysed reaction is N-acetyl-S-(2-succino)-L-cysteine + NADH + O2 + H(+) = N-acetyl-L-cysteine + oxaloacetate + NAD(+) + H2O. Its pathway is amino-acid biosynthesis; L-cysteine biosynthesis. Its function is as follows. Catalyzes the oxidative cleavage of the C-S bond of N-acetyl-S-(2-succino)cysteine, forming oxaloacetate and N-acetylcysteine (NAC). Is involved in a S-(2-succino)cysteine (2SC) degradation pathway that allows B.subtilis to grow on 2SC as a sole sulfur source, via its metabolization to cysteine. Shows almost no activity on S-succinylglutathione and 2SC. The chain is N-acetyl-S-(2-succino)cysteine monooxygenase from Bacillus subtilis (strain 168).